The primary structure comprises 376 residues: Erythronate-4-phosphate dehydrogenase (376 aa).

Substrate-binding residues include Ser45 and Thr67. Asp147 is a binding site for NAD(+). The active site involves Arg209. NAD(+) is bound at residue Asp233. Glu238 is a catalytic residue. Catalysis depends on His255, which acts as the Proton donor. Position 258 (Gly258) interacts with NAD(+). Tyr259 is a substrate binding site.

The protein belongs to the D-isomer specific 2-hydroxyacid dehydrogenase family. PdxB subfamily. As to quaternary structure, homodimer.

It localises to the cytoplasm. It catalyses the reaction 4-phospho-D-erythronate + NAD(+) = (R)-3-hydroxy-2-oxo-4-phosphooxybutanoate + NADH + H(+). It functions in the pathway cofactor biosynthesis; pyridoxine 5'-phosphate biosynthesis; pyridoxine 5'-phosphate from D-erythrose 4-phosphate: step 2/5. In terms of biological role, catalyzes the oxidation of erythronate-4-phosphate to 3-hydroxy-2-oxo-4-phosphonooxybutanoate. The chain is Erythronate-4-phosphate dehydrogenase from Shewanella oneidensis (strain ATCC 700550 / JCM 31522 / CIP 106686 / LMG 19005 / NCIMB 14063 / MR-1).